The sequence spans 101 residues: Iron-sulfur cluster assembly protein CyaY (101 aa).

Belongs to the frataxin family.

Its function is as follows. Involved in iron-sulfur (Fe-S) cluster assembly. May act as a regulator of Fe-S biogenesis. This Rickettsia akari (strain Hartford) protein is Iron-sulfur cluster assembly protein CyaY.